The primary structure comprises 310 residues: uncharacterized protein (310 aa).

The active site involves histidine 239.

The protein belongs to the IUNH family.

It is found in the cytoplasm. The protein localises to the nucleus. This is an uncharacterized protein from Schizosaccharomyces pombe (strain 972 / ATCC 24843) (Fission yeast).